A 421-amino-acid chain; its full sequence is UDP-N-acetylglucosamine 1-carboxyvinyltransferase 1 (421 aa).

22-23 (KN) provides a ligand contact to phosphoenolpyruvate. UDP-N-acetyl-alpha-D-glucosamine is bound at residue Arg95. Cys119 acts as the Proton donor in catalysis. Cys119 is subject to 2-(S-cysteinyl)pyruvic acid O-phosphothioketal. UDP-N-acetyl-alpha-D-glucosamine contacts are provided by residues 124-128 (RPIEQ), Asp308, and Val330.

The protein belongs to the EPSP synthase family. MurA subfamily.

It localises to the cytoplasm. It catalyses the reaction phosphoenolpyruvate + UDP-N-acetyl-alpha-D-glucosamine = UDP-N-acetyl-3-O-(1-carboxyvinyl)-alpha-D-glucosamine + phosphate. It functions in the pathway cell wall biogenesis; peptidoglycan biosynthesis. Functionally, cell wall formation. Adds enolpyruvyl to UDP-N-acetylglucosamine. The sequence is that of UDP-N-acetylglucosamine 1-carboxyvinyltransferase 1 from Staphylococcus epidermidis (strain ATCC 35984 / DSM 28319 / BCRC 17069 / CCUG 31568 / BM 3577 / RP62A).